The following is a 534-amino-acid chain: Protein tweety homolog 2 (534 aa).

Residues 1-44 are Extracellular-facing; it reads MATARVEYIAPWWVYWLHNLPHVDFSLQRESGDFNPKDPGYQQT. Residues 45-65 traverse the membrane as a helical segment; sequence LLFVALFIALCAAVNLLFVSG. The Cytoplasmic segment spans residues 66–87; sequence YLICLCCCKKEDETETKMTSSC. The helical transmembrane segment at 88-108 threads the bilayer; sequence CVTWTAAVSGLLCCAAVGIGF. The Extracellular portion of the chain corresponds to 109 to 213; that stretch reads YGNSETNDGV…NASIIEYYRW (105 aa). Residues E113 and D116 each coordinate Ca(2+). N129 is a glycosylation site (N-linked (GlcNAc...) asparagine). The RGD signature appears at 164–166; sequence RGD. Residues N197 and N204 are each glycosylated (N-linked (GlcNAc...) asparagine). A helical membrane pass occupies residues 214–234; sequence LSYLILFITDVVICLVTCLGL. Residues 235-240 lie on the Cytoplasmic side of the membrane; sequence AKKSKC. The chain crosses the membrane as a helical span at residues 241-261; it reads LLLTMLCCGLIALMLSWASLA. At 262 to 388 the chain is on the extracellular side; that stretch reads LETSSAVGTS…IGICYDGVEG (127 aa). Intrachain disulfides connect C274-C382 and C300-C367. Residue N352 is glycosylated (N-linked (GlcNAc...) asparagine). A helical transmembrane segment spans residues 389 to 409; the sequence is LLYLSLFSLLAAVAFTAMVCA. At 410 to 534 the chain is on the cytoplasmic side; the sequence is MPRAWKHLAA…PNIYSNVFPA (125 aa).

The protein belongs to the tweety family. Forms cis-homodimers in the presence of Ca(+2) and forms monomers and trans-dimers in the absence of Ca(2+).

It localises to the cell membrane. It carries out the reaction chloride(in) = chloride(out). The catalysed reaction is L-glutamate(out) = L-glutamate(in). Its function is as follows. May act as a calcium-independent, swelling-dependent volume-regulated anion channel (VRAC-swell) which plays a pivotal role in the process of regulatory volume decrease (RVD) in the brain through the efflux of anions like chloride and organic osmolytes like glutamate. Probable large-conductance Ca(2+)-activated chloride channel. The sequence is that of Protein tweety homolog 2 (ttyh2) from Xenopus laevis (African clawed frog).